A 147-amino-acid polypeptide reads, in one-letter code: Large ribosomal subunit protein bL9 (147 aa).

The segment at valine 44–leucine 63 is disordered. Residues aspartate 48–leucine 63 are compositionally biased toward basic and acidic residues.

The protein belongs to the bacterial ribosomal protein bL9 family.

Binds to the 23S rRNA. In Brevibacillus brevis (strain 47 / JCM 6285 / NBRC 100599), this protein is Large ribosomal subunit protein bL9.